The primary structure comprises 168 residues: MFWKLSLTLLLVAVLVKVAETRKNRPAGAIPSPYKDGSSNNSERWHHQIKEVLASSQEALVVTERKYLKSDWCKTQPLRQTVSEEGCRSRTILNRFCYGQCNSFYIPRHVKKEEDSFQSCAFCKPQRVTSVIVELECPGLDPPFRIKKIQKVKHCRCMSVNLSDSDKQ.

Positions 1-21 are cleaved as a signal peptide; that stretch reads MFWKLSLTLLLVAVLVKVAET. The N-linked (GlcNAc...) asparagine glycan is linked to Asn-40. Intrachain disulfides connect Cys-73/Cys-123, Cys-87/Cys-137, Cys-97/Cys-155, and Cys-101/Cys-157. In terms of domain architecture, CTCK spans 73–163; that stretch reads CKTQPLRQTV…HCRCMSVNLS (91 aa). An N-linked (GlcNAc...) asparagine glycan is attached at Asn-161.

It belongs to the DAN family. As to quaternary structure, homodimer. Interacts with BMP2, BMP4 and BMP7, but has lower affinity for BMP7 than for BMP2 and BMP4. Binds heparin; this impairs the interaction with BMP2. N-glycosylated. As to expression, highly expressed in the ovary, followed by brain, spleen, colon, kidney and uterus. In ovary expressed in granulosa cells of selective early antral follicles.

Its subcellular location is the secreted. In terms of biological role, cytokine that inhibits the activity of BMP2 and BMP4 in a dose-dependent manner, and thereby modulates signaling by BMP family members. Contributes to the regulation of embryonic morphogenesis via BMP family members. Antagonizes BMP4-induced suppression of progesterone production in granulosa cells. The polypeptide is Gremlin-2 (Grem2) (Mus musculus (Mouse)).